A 258-amino-acid chain; its full sequence is Phosphate import ATP-binding protein PstB 2 (258 aa).

An ABC transporter domain is found at 12 to 253 (IQVRDLNFYY…PQQKQTEDYI (242 aa)). 44–51 (GPSGCGKS) serves as a coordination point for ATP.

It belongs to the ABC transporter superfamily. Phosphate importer (TC 3.A.1.7) family. In terms of assembly, the complex is composed of two ATP-binding proteins (PstB), two transmembrane proteins (PstC and PstA) and a solute-binding protein (PstS).

The protein resides in the cell inner membrane. It carries out the reaction phosphate(out) + ATP + H2O = ADP + 2 phosphate(in) + H(+). Part of the ABC transporter complex PstSACB involved in phosphate import. Responsible for energy coupling to the transport system. The chain is Phosphate import ATP-binding protein PstB 2 from Yersinia pestis bv. Antiqua (strain Nepal516).